Consider the following 269-residue polypeptide: Zinc transporter ZupT (269 aa).

Transmembrane regions (helical) follow at residues 12 to 32 (AFSI…LVMF), 41 to 61 (LSFG…TEIF), 75 to 95 (DHAF…IALI), 126 to 146 (MMAA…TFFA), 152 to 172 (AVGM…GISI), 187 to 207 (VWAC…GYLV), 211 to 231 (FLSP…MVFL), and 249 to 269 (TVYG…LFHF). The Fe(2+) site is built by asparagine 136 and glutamate 139. Zn(2+)-binding residues include glutamate 139 and histidine 164. Fe(2+) contacts are provided by asparagine 165, glutamate 168, and glutamate 197. Glutamate 168 contacts Zn(2+).

It belongs to the ZIP transporter (TC 2.A.5) family. ZupT subfamily.

It is found in the cell inner membrane. The catalysed reaction is Zn(2+)(in) = Zn(2+)(out). Its function is as follows. Mediates zinc uptake. May also transport other divalent cations. This chain is Zinc transporter ZupT, found in Neisseria meningitidis serogroup A / serotype 4A (strain DSM 15465 / Z2491).